Reading from the N-terminus, the 190-residue chain is Xanthine phosphoribosyltransferase (190 aa).

Xanthine-binding residues include Leu-20 and Asn-27. A 5-phospho-alpha-D-ribose 1-diphosphate-binding site is contributed by 128 to 132 (ANGEA). Lys-156 provides a ligand contact to xanthine.

Belongs to the purine/pyrimidine phosphoribosyltransferase family. Xpt subfamily. As to quaternary structure, homodimer.

It localises to the cytoplasm. It carries out the reaction XMP + diphosphate = xanthine + 5-phospho-alpha-D-ribose 1-diphosphate. It functions in the pathway purine metabolism; XMP biosynthesis via salvage pathway; XMP from xanthine: step 1/1. Its function is as follows. Converts the preformed base xanthine, a product of nucleic acid breakdown, to xanthosine 5'-monophosphate (XMP), so it can be reused for RNA or DNA synthesis. The protein is Xanthine phosphoribosyltransferase of Clostridium botulinum (strain Eklund 17B / Type B).